We begin with the raw amino-acid sequence, 346 residues long: MTEHIQFSPEKDALVLLDQRYLPTREDWFDCKTTDDIVEALVVMVVRGAPAIGVTAAYGCYLAGREVAGSADWKAELEKNLDKIENARPTAVNLRWAVREMKRIWAEAGDVSLDELCAIWLKRAKEIHVDDIRMCEDIGKFGGELMDDGDTIMTHCNAGALATAGYGTALGVVRGAVDQGKKVSVIANETRPFLQGARLTAYELHRDGIPVKVACDNACALLMKKGLVQKVVVGADRVTANGDAVNKIGTYGVALLAREFGIPFYVAAPVYTIDPETPTGDDVPIEDRTPTEVTHVGDHRITPEGVEVFNFAFDPTPNELIAGIITEKGVLRPPYTEAIKKLFEDN.

Substrate is bound by residues 47–49 (RGA), Arg88, and Gln195. The active-site Proton donor is the Asp236. 246 to 247 (NK) contacts substrate.

Belongs to the eIF-2B alpha/beta/delta subunits family. MtnA subfamily.

The catalysed reaction is 5-(methylsulfanyl)-alpha-D-ribose 1-phosphate = 5-(methylsulfanyl)-D-ribulose 1-phosphate. It participates in amino-acid biosynthesis; L-methionine biosynthesis via salvage pathway; L-methionine from S-methyl-5-thio-alpha-D-ribose 1-phosphate: step 1/6. Its function is as follows. Catalyzes the interconversion of methylthioribose-1-phosphate (MTR-1-P) into methylthioribulose-1-phosphate (MTRu-1-P). This is Methylthioribose-1-phosphate isomerase from Maridesulfovibrio salexigens (strain ATCC 14822 / DSM 2638 / NCIMB 8403 / VKM B-1763) (Desulfovibrio salexigens).